The primary structure comprises 432 residues: Adenylosuccinate synthetase (432 aa).

Residues 12-18 (GDEGKGK) and 40-42 (GHT) each bind GTP. The Proton acceptor role is filled by aspartate 13. Positions 13 and 40 each coordinate Mg(2+). IMP is bound by residues 13-16 (DEGK), 38-41 (NAGH), threonine 132, arginine 146, glutamine 226, threonine 241, and arginine 305. Histidine 41 (proton donor) is an active-site residue. 301 to 307 (TVTGRKR) contacts substrate. Residues arginine 307, 333–335 (KLD), and 415–417 (STS) contribute to the GTP site.

The protein belongs to the adenylosuccinate synthetase family. In terms of assembly, homodimer. It depends on Mg(2+) as a cofactor.

It is found in the cytoplasm. It carries out the reaction IMP + L-aspartate + GTP = N(6)-(1,2-dicarboxyethyl)-AMP + GDP + phosphate + 2 H(+). Its pathway is purine metabolism; AMP biosynthesis via de novo pathway; AMP from IMP: step 1/2. Its function is as follows. Plays an important role in the de novo pathway of purine nucleotide biosynthesis. Catalyzes the first committed step in the biosynthesis of AMP from IMP. The chain is Adenylosuccinate synthetase from Allorhizobium ampelinum (strain ATCC BAA-846 / DSM 112012 / S4) (Agrobacterium vitis (strain S4)).